Consider the following 122-residue polypeptide: UPF0102 protein NGR_c36770 (122 aa).

Belongs to the UPF0102 family.

This Sinorhizobium fredii (strain NBRC 101917 / NGR234) protein is UPF0102 protein NGR_c36770.